The following is a 208-amino-acid chain: FMN-dependent NADH:quinone oxidoreductase (208 aa).

Residues Ser-10, 16 to 18, and 96 to 99 contribute to the FMN site; these read SRS and MYNF.

It belongs to the azoreductase type 1 family. As to quaternary structure, homodimer. FMN is required as a cofactor.

The catalysed reaction is 2 a quinone + NADH + H(+) = 2 a 1,4-benzosemiquinone + NAD(+). It carries out the reaction N,N-dimethyl-1,4-phenylenediamine + anthranilate + 2 NAD(+) = 2-(4-dimethylaminophenyl)diazenylbenzoate + 2 NADH + 2 H(+). Its function is as follows. Quinone reductase that provides resistance to thiol-specific stress caused by electrophilic quinones. In terms of biological role, also exhibits azoreductase activity. Catalyzes the reductive cleavage of the azo bond in aromatic azo compounds to the corresponding amines. The polypeptide is FMN-dependent NADH:quinone oxidoreductase (Xanthobacter autotrophicus (strain ATCC BAA-1158 / Py2)).